Here is a 56-residue protein sequence, read N- to C-terminus: Ribosome biogenesis protein Nop10 (56 aa).

Belongs to the NOP10 family.

Functionally, involved in ribosome biogenesis; more specifically in 18S rRNA pseudouridylation and in cleavage of pre-rRNA. In Methanococcoides burtonii (strain DSM 6242 / NBRC 107633 / OCM 468 / ACE-M), this protein is Ribosome biogenesis protein Nop10.